The primary structure comprises 430 residues: Enolase (430 aa).

Glutamine 165 lines the (2R)-2-phosphoglycerate pocket. The active-site Proton donor is the glutamate 207. Residues aspartate 244, glutamate 287, and aspartate 314 each coordinate Mg(2+). The (2R)-2-phosphoglycerate site is built by lysine 339, arginine 368, serine 369, and lysine 390. Lysine 339 acts as the Proton acceptor in catalysis.

Belongs to the enolase family. Component of the RNA degradosome, a multiprotein complex involved in RNA processing and mRNA degradation. Mg(2+) is required as a cofactor.

It is found in the cytoplasm. The protein localises to the secreted. Its subcellular location is the cell surface. It carries out the reaction (2R)-2-phosphoglycerate = phosphoenolpyruvate + H2O. It functions in the pathway carbohydrate degradation; glycolysis; pyruvate from D-glyceraldehyde 3-phosphate: step 4/5. In terms of biological role, catalyzes the reversible conversion of 2-phosphoglycerate (2-PG) into phosphoenolpyruvate (PEP). It is essential for the degradation of carbohydrates via glycolysis. The chain is Enolase from Xanthomonas oryzae pv. oryzae (strain MAFF 311018).